The primary structure comprises 169 residues: MIKPQLSKKIDSVAVLQEKISTAKTVIVFEYASLPVSSFMQLRRELKKTSCEVKVYPKNIMQRAVTNAKQDDLVTFLKGAKALIISPQELLEPIKTIYNFAKKNKAVKIVSGIVEQKIVSLQEIKTLATLPSKEQMLALLAASMFAPLQHLAIGLNMLVQTKKQENPQQ.

Belongs to the universal ribosomal protein uL10 family. Part of the ribosomal stalk of the 50S ribosomal subunit. The N-terminus interacts with L11 and the large rRNA to form the base of the stalk. The C-terminus forms an elongated spine to which L12 dimers bind in a sequential fashion forming a multimeric L10(L12)X complex.

Functionally, forms part of the ribosomal stalk, playing a central role in the interaction of the ribosome with GTP-bound translation factors. The protein is Large ribosomal subunit protein uL10 of Onion yellows phytoplasma (strain OY-M).